An 88-amino-acid polypeptide reads, in one-letter code: Small ribosomal subunit protein uS15 (88 aa).

The protein belongs to the universal ribosomal protein uS15 family. Part of the 30S ribosomal subunit. Forms a bridge to the 50S subunit in the 70S ribosome, contacting the 23S rRNA.

Functionally, one of the primary rRNA binding proteins, it binds directly to 16S rRNA where it helps nucleate assembly of the platform of the 30S subunit by binding and bridging several RNA helices of the 16S rRNA. In terms of biological role, forms an intersubunit bridge (bridge B4) with the 23S rRNA of the 50S subunit in the ribosome. The sequence is that of Small ribosomal subunit protein uS15 from Metamycoplasma arthritidis (strain 158L3-1) (Mycoplasma arthritidis).